The following is a 74-amino-acid chain: Ferredoxin-like protein in nif region (74 aa).

In terms of domain architecture, 4Fe-4S ferredoxin-type spans 2–30; it reads PFKIIASQCTSCSACEPLCPNVAISEKGG. Residues Cys10, Cys13, Cys16, Cys20, Cys39, Cys51, and Cys55 each coordinate [4Fe-4S] cluster.

[4Fe-4S] cluster is required as a cofactor.

The polypeptide is Ferredoxin-like protein in nif region (frxA) (Bradyrhizobium diazoefficiens (strain JCM 10833 / BCRC 13528 / IAM 13628 / NBRC 14792 / USDA 110)).